Reading from the N-terminus, the 291-residue chain is Elongation factor Ts (291 aa).

Residues 80–83 (TDFV) are involved in Mg(2+) ion dislocation from EF-Tu.

This sequence belongs to the EF-Ts family.

It is found in the cytoplasm. Functionally, associates with the EF-Tu.GDP complex and induces the exchange of GDP to GTP. It remains bound to the aminoacyl-tRNA.EF-Tu.GTP complex up to the GTP hydrolysis stage on the ribosome. This is Elongation factor Ts from Acinetobacter baylyi (strain ATCC 33305 / BD413 / ADP1).